We begin with the raw amino-acid sequence, 523 residues long: ATP synthase subunit alpha (523 aa).

179–186 contacts ATP; the sequence is GDRQTGKT.

The protein belongs to the ATPase alpha/beta chains family. As to quaternary structure, F-type ATPases have 2 components, CF(1) - the catalytic core - and CF(0) - the membrane proton channel. CF(1) has five subunits: alpha(3), beta(3), gamma(1), delta(1), epsilon(1). CF(0) has three main subunits: a(1), b(2) and c(9-12). The alpha and beta chains form an alternating ring which encloses part of the gamma chain. CF(1) is attached to CF(0) by a central stalk formed by the gamma and epsilon chains, while a peripheral stalk is formed by the delta and b chains.

It localises to the cell inner membrane. It catalyses the reaction ATP + H2O + 4 H(+)(in) = ADP + phosphate + 5 H(+)(out). In terms of biological role, produces ATP from ADP in the presence of a proton gradient across the membrane. The alpha chain is a regulatory subunit. In Vibrio parahaemolyticus serotype O3:K6 (strain RIMD 2210633), this protein is ATP synthase subunit alpha.